The sequence spans 674 residues: MNFLYNNSDYSSTSHTMKSPSAYNQFPKLQASNSTAGNNNTATTATAAAAAASASASASVTPQLISPTTLTTPQNKYKRGGLDNTLPKIETTRKNRPDDGNSITPSNSINSGTTKLTLPPRRVWVKKPQTNNPTTVLCYVNDIIDDLKVAVVNKYPNTIGRYEDAADLLVKIDLNNIRVPVSPSVNRVSQRTPFDNCIILEPDQNVWQILDNYFPNGMAMHDALIIETPTFKPDHQMLTPITANMNNNSNTFIPFQERQSSIGNNNNNNSNVNNNNKAQAVKHPQPMQPNNTRVGLHKSYAMNRSSFSTNNNPVPSIIKDRSVSPSNLGVSRNSPVSHKRSYSNPVSSPNSVATQANNPSAVLLLPRNFSLANNNSNQASQSSGGTPAKKVLSEDGSKSVNDKTEEVVSSKLKPNDNNKSYQAKQQEQQTAEQSENGFSETSASPEAVHNSKAAPLPLTKSSTTATTTSSNSISNNNNTSSKGKPSQSKLKAANDPTPTDIVLPSISVLVVEDNAINQAILGAFLRKRKIHYQIAKNGQEAIDKWKKGGFHLVLMDIQLPVKSGIEATKEIRHLEKLNRIGVFHENEIGKNVIINEEDRLTSNTFRSPVIIVALTASSNSSVDKTNALTAGCNDYLTKPVNLVWLQNKITEWGCMQALIDFDGWKDKNRRLNKA.

Residues 66–75 (SPTTLTTPQN) show a composition bias toward polar residues. Disordered regions lie at residues 66–115 (SPTT…GTTK), 259–354 (QSSI…SVAT), and 372–497 (ANNN…NDPT). Residues 90–99 (ETTRKNRPDD) show a composition bias toward basic and acidic residues. Residues 101–115 (NSITPSNSINSGTTK) are compositionally biased toward polar residues. The segment covering 264 to 276 (NNNNNNSNVNNNN) has biased composition (low complexity). Composition is skewed to polar residues over residues 302–314 (MNRS…NNPV) and 323–336 (VSPS…NSPV). Low complexity-rich tracts occupy residues 343–352 (SNPVSSPNSV) and 372–383 (ANNNSNQASQSS). The segment covering 391–416 (VLSEDGSKSVNDKTEEVVSSKLKPND) has biased composition (basic and acidic residues). Positions 422–433 (QAKQQEQQTAEQ) are enriched in low complexity. A compositionally biased stretch (polar residues) spans 434-444 (SENGFSETSAS). Over residues 459–481 (TKSSTTATTTSSNSISNNNNTSS) the composition is skewed to low complexity. In terms of domain architecture, Response regulatory spans 507–653 (SVLVVEDNAI…WLQNKITEWG (147 aa)). At Asp-556 the chain carries 4-aspartylphosphate.

It belongs to the SSK1 family.

Its function is as follows. Final receptor of the SLN1-YPD1-SSK1 two-component regulatory system, which controls activity of the HOG1 pathway in response to oxidative stress and probably also to the osmolarity of the extracellular environment. Involved in cell wall biosynthesis, hyphal growth, and virulence. Regulates the expression of CHK1, as well as of a subset of genes whose functions are associated with cell wall biosynthesis and adaptation to oxidative stress. Provides at least partial adaptive functions for the survival following encounter with human neutrophils. This is Oxidative stress response two-component system protein SSK1 (SSK1) from Candida albicans (strain SC5314 / ATCC MYA-2876) (Yeast).